The sequence spans 355 residues: Protein RecA (355 aa).

Residue glycine 65 to threonine 72 participates in ATP binding.

It belongs to the RecA family.

Its subcellular location is the cytoplasm. Its function is as follows. Can catalyze the hydrolysis of ATP in the presence of single-stranded DNA, the ATP-dependent uptake of single-stranded DNA by duplex DNA, and the ATP-dependent hybridization of homologous single-stranded DNAs. It interacts with LexA causing its activation and leading to its autocatalytic cleavage. The polypeptide is Protein RecA (Pseudomonas putida (strain ATCC 47054 / DSM 6125 / CFBP 8728 / NCIMB 11950 / KT2440)).